Here is an 889-residue protein sequence, read N- to C-terminus: Alanine--tRNA ligase (889 aa).

The Zn(2+) site is built by H569, H573, C671, and H675.

The protein belongs to the class-II aminoacyl-tRNA synthetase family. Zn(2+) serves as cofactor.

The protein resides in the cytoplasm. The enzyme catalyses tRNA(Ala) + L-alanine + ATP = L-alanyl-tRNA(Ala) + AMP + diphosphate. Functionally, catalyzes the attachment of alanine to tRNA(Ala) in a two-step reaction: alanine is first activated by ATP to form Ala-AMP and then transferred to the acceptor end of tRNA(Ala). Also edits incorrectly charged Ser-tRNA(Ala) and Gly-tRNA(Ala) via its editing domain. This chain is Alanine--tRNA ligase, found in Synechococcus sp. (strain CC9605).